Consider the following 437-residue polypeptide: Enolase (437 aa).

Q162 provides a ligand contact to (2R)-2-phosphoglycerate. E204 acts as the Proton donor in catalysis. Mg(2+) is bound by residues D251, E297, and D324. (2R)-2-phosphoglycerate contacts are provided by K349, R378, S379, and K400. K349 acts as the Proton acceptor in catalysis.

Belongs to the enolase family. Mg(2+) serves as cofactor.

Its subcellular location is the cytoplasm. The protein resides in the secreted. It is found in the cell surface. It catalyses the reaction (2R)-2-phosphoglycerate = phosphoenolpyruvate + H2O. It participates in carbohydrate degradation; glycolysis; pyruvate from D-glyceraldehyde 3-phosphate: step 4/5. In terms of biological role, catalyzes the reversible conversion of 2-phosphoglycerate (2-PG) into phosphoenolpyruvate (PEP). It is essential for the degradation of carbohydrates via glycolysis. The sequence is that of Enolase from Chlorobium limicola (strain DSM 245 / NBRC 103803 / 6330).